An 859-amino-acid chain; its full sequence is Probable potassium transporter 14 (859 aa).

Residues 1-19 are compositionally biased toward gly residues; it reads METRSGGSGSASGGGGGGR. Residues 1–69 are disordered; that stretch reads METRSGGSGS…SRGGCSDSDD (69 aa). The Cytoplasmic portion of the chain corresponds to 1-112; the sequence is METRSGGSGS…RHQEITVGRS (112 aa). Over residues 54-65 the composition is skewed to low complexity; it reads PAAASGSRGGCS. A helical transmembrane segment spans residues 113-133; it reads IVLAVQTLGVVFGDVGTSPLY. Topologically, residues 134-155 are extracellular; the sequence is AFDVMFNKYPITSKEDVLGALS. The helical transmembrane segment at 156 to 176 threads the bilayer; the sequence is LVIYTLILIPLLKYTLIALWG. Topologically, residues 177–240 are cytoplasmic; the sequence is NDDGEGGTFA…RLETSSMLKK (64 aa). Residues 241–261 form a helical membrane-spanning segment; the sequence is LLLMLVLFGTSMVIADGVVTP. The Extracellular portion of the chain corresponds to 262-275; that stretch reads AMSVMSAVNGLKVG. Residues 276-296 form a helical membrane-spanning segment; that stretch reads ISSVNEGEVVMITVAVLIVLF. The Cytoplasmic segment spans residues 297–305; that stretch reads TLQRFGSSK. The chain crosses the membrane as a helical span at residues 306–326; sequence VALAVGPALFIWFCCLAGIGI. Over 327–359 the chain is Extracellular; it reads YNMKTYGSAVLQAFNPMYIYYYFERNPTQAWMS. Residues 360–380 traverse the membrane as a helical segment; that stretch reads LGGCLLCATGSEAMFADLCYF. Residues 381 to 388 are Cytoplasmic-facing; that stretch reads SVKSVQLT. The helical transmembrane segment at 389–409 threads the bilayer; sequence FVFLVLPCLLLGYLGQAAFLM. The Extracellular portion of the chain corresponds to 410–417; sequence ENLTENQQ. Asn411 is a glycosylation site (N-linked (GlcNAc...) asparagine). A helical transmembrane segment spans residues 418–438; that stretch reads VFFLSIPNQAFWPVVFIAILA. Topologically, residues 439 to 478 are cytoplasmic; sequence AIIASRTMTTAIFSTIKQATALGCFPRLKIIHTSRSFMGQ. A helical membrane pass occupies residues 479–499; that stretch reads IYIPMMNWFLLVSCLAFVTMF. Topologically, residues 500–508 are extracellular; that stretch reads GSINEIGNA. A helical transmembrane segment spans residues 509–531; the sequence is YGIAELGVMMMTTVLVTIIMLLI. Residues 532 to 535 are Cytoplasmic-facing; sequence WQIN. Residues 536-558 form a helical membrane-spanning segment; the sequence is IIVVLCFLTLSLGLELIFFSSVL. The Extracellular portion of the chain corresponds to 559-560; that stretch reads GS. A helical membrane pass occupies residues 561-581; sequence VADGSWVLLVFAAVLYLIMYI. Topologically, residues 582 to 859 are cytoplasmic; it reads WNYGTKLKYE…MMQVAMQYMV (278 aa). The interval 752–772 is disordered; that stretch reads GVPPAEAAGTTEHPTIGSSMS. Positions 763-772 are enriched in polar residues; that stretch reads EHPTIGSSMS.

This sequence belongs to the HAK/KUP transporter (TC 2.A.72.3) family.

It is found in the membrane. In terms of biological role, high-affinity potassium transporter. The sequence is that of Probable potassium transporter 14 (HAK14) from Oryza sativa subsp. japonica (Rice).